We begin with the raw amino-acid sequence, 495 residues long: Serine/threonine-protein phosphatase 2A regulatory subunit sur-6 (495 aa).

The interval Met-1–Asp-27 is disordered. Over residues Ala-12–Glu-21 the composition is skewed to polar residues. 6 WD repeats span residues Thr-64–Lys-103, Glu-130–Gly-171, Ala-215–Asn-253, Glu-264–Ala-304, Glu-323–Glu-361, and Glu-378–Thr-419. Residues Ser-439 to Ser-459 form a disordered region. The WD 7 repeat unit spans residues Gln-464–Val-495.

Belongs to the phosphatase 2A regulatory subunit B family. Part of a complex consisting of a common heterodimeric core enzyme, composed of catalytic subunit let-92 and constant regulatory subunit paa-1, that associates with a variety of regulatory subunits which confer distinct properties to the holoenzyme. Interacts with let-92.

The protein localises to the cytoplasm. Probable regulatory subunit of serine/threonine phosphatase let-92. Together with let-92 and constant regulatory subunit paa-1, positively regulates centriole duplication during early embryonic cell divisions by preventing the degradation of sas-5 and kinase zyg-1. In addition, during vulva development, may play a role with phosphatase let-92 and regulatory subunit paa-1 in the induction of vulva cell precursors by positively regulating let-60/Ras-MAP kinase signaling, probably by promoting lin-45 activation. In intestinal epithelial cells, may play a role in the late secretory pathway probably by regulating the exocyst, a protein complex involved in targeting secretory vesicles to the plasma membrane. This Caenorhabditis elegans protein is Serine/threonine-protein phosphatase 2A regulatory subunit sur-6.